The primary structure comprises 141 residues: ATP synthase epsilon chain 1 (141 aa).

It belongs to the ATPase epsilon chain family. In terms of assembly, F-type ATPases have 2 components, CF(1) - the catalytic core - and CF(0) - the membrane proton channel. CF(1) has five subunits: alpha(3), beta(3), gamma(1), delta(1), epsilon(1). CF(0) has three main subunits: a, b and c.

Its subcellular location is the cell inner membrane. Its function is as follows. Produces ATP from ADP in the presence of a proton gradient across the membrane. The sequence is that of ATP synthase epsilon chain 1 from Paraburkholderia xenovorans (strain LB400).